Reading from the N-terminus, the 321-residue chain is Lipoyl synthase (321 aa).

Residues Cys-68, Cys-73, Cys-79, Cys-94, Cys-98, Cys-101, and Ser-308 each contribute to the [4Fe-4S] cluster site. In terms of domain architecture, Radical SAM core spans 80–297; it reads FNHGTATFMI…KAEALAMGFT (218 aa).

The protein belongs to the radical SAM superfamily. Lipoyl synthase family. [4Fe-4S] cluster serves as cofactor.

It localises to the cytoplasm. The catalysed reaction is [[Fe-S] cluster scaffold protein carrying a second [4Fe-4S](2+) cluster] + N(6)-octanoyl-L-lysyl-[protein] + 2 oxidized [2Fe-2S]-[ferredoxin] + 2 S-adenosyl-L-methionine + 4 H(+) = [[Fe-S] cluster scaffold protein] + N(6)-[(R)-dihydrolipoyl]-L-lysyl-[protein] + 4 Fe(3+) + 2 hydrogen sulfide + 2 5'-deoxyadenosine + 2 L-methionine + 2 reduced [2Fe-2S]-[ferredoxin]. Its pathway is protein modification; protein lipoylation via endogenous pathway; protein N(6)-(lipoyl)lysine from octanoyl-[acyl-carrier-protein]: step 2/2. Catalyzes the radical-mediated insertion of two sulfur atoms into the C-6 and C-8 positions of the octanoyl moiety bound to the lipoyl domains of lipoate-dependent enzymes, thereby converting the octanoylated domains into lipoylated derivatives. The protein is Lipoyl synthase of Escherichia coli O9:H4 (strain HS).